The primary structure comprises 131 residues: T3C protein (131 aa).

The protein is T3C protein of Ovis aries (Sheep).